We begin with the raw amino-acid sequence, 523 residues long: Thiamine pathway transporter THI73 (523 aa).

The Cytoplasmic segment spans residues 1-79 (MKNMSQRSMD…LSPKVLRKVD (79 aa)). A helical membrane pass occupies residues 80–100 (LFILPFLCCTYLLMFLDKALL). Over 101–118 (NYAASMGIKDHLKGNEFS) the chain is Extracellular. Residues 119-139 (NLGTIFSAAYIFMEPVVTYLI) form a helical membrane-spanning segment. The Cytoplasmic portion of the chain corresponds to 140 to 141 (QK). The chain crosses the membrane as a helical span at residues 142 to 162 (FPISKILGTFITVWGIVLACH). At 163 to 176 (AACKTYASLMVVRT) the chain is on the extracellular side. The chain crosses the membrane as a helical span at residues 177-197 (LLGLFESSSAVGCIAISGMYY). Over 198–207 (TKSEQSARIG) the chain is Cytoplasmic. The helical transmembrane segment at 208–228 (FWATQAGTGYIVGGLISFGFL) threads the bilayer. Residues 229–239 (HYHGTAFTSWQ) are Extracellular-facing. The helical transmembrane segment at 240 to 260 (IMFLVVGLVTVAFGVLTFLYL) threads the bilayer. The Cytoplasmic segment spans residues 261–312 (PDNVTNAWFLNKEEKIQVVEHIRANQTGLETKKFKKQQVKELFLHDKFTWPM). The helical transmembrane segment at 313 to 333 (LLLTACSQISTGAIGTFSVTI) threads the bilayer. The Extracellular segment spans residues 334-345 (TGTFGFDKYETA). The helical transmembrane segment at 346 to 366 (LLQLPIGAITAMIILITTQML) threads the bilayer. Topologically, residues 367–371 (SRWGH) are cytoplasmic. Residues 372-392 (ITLITTSMYIPAIIGCIVLIS) traverse the membrane as a helical segment. Residues 393-400 (LPLSHKIG) are Extracellular-facing. A helical membrane pass occupies residues 401-421 (NLFSLYLLYSGSCVITNIYIW). Residues 422 to 432 (NSCNTSGYTKR) are Cytoplasmic-facing. Residues 433 to 452 (VFRNAITMIVYNVSCIIAPQ) traverse the membrane as a helical segment. Over 453 to 466 (MFRAYSAPRYIPAK) the chain is Extracellular. Residues 467-487 (IALLVTQCVCVPLQLYIGYIC) form a helical membrane-spanning segment. Residues 488–523 (KKENEKRDKEQEGQERKKYQFLDLTDIENRNFRYIY) lie on the Cytoplasmic side of the membrane.

The protein belongs to the major facilitator superfamily. Allantoate permease family.

Its subcellular location is the endoplasmic reticulum membrane. It is found in the cell membrane. Transports either thiamine or, rather, a related metabolite involved in the thiamine biosynthesis pathway. The protein is Thiamine pathway transporter THI73 (THI73) of Saccharomyces cerevisiae (strain ATCC 204508 / S288c) (Baker's yeast).